Here is a 500-residue protein sequence, read N- to C-terminus: Toluene-4-monooxygenase system, hydroxylase component subunit alpha (500 aa).

6 residues coordinate Fe cation: Glu104, Glu134, His137, Glu197, Glu231, and His234.

It belongs to the TmoA/XamoA family. In terms of assembly, the alkene monooxygenase multicomponent enzyme system is composed of an electron transfer component and a monooxygenase component interacting with the effector protein TmoD. The electron transfer component is composed of a ferredoxin reductase (TmoF) and a ferredoxin (TmoC), and the monooxygenase component is formed by a heterohexamer (dimer of heterotrimers) of two alpha subunits (TmoA), two beta subunits (TmoE) and two gamma subunits (TmoB). Requires Fe(2+) as cofactor.

It carries out the reaction toluene + NADH + O2 + H(+) = 4-methylphenol + NAD(+) + H2O. Its pathway is xenobiotic degradation; toluene degradation. Inhibited by Zn(2+) and Cu(2+). Functionally, component of the toluene-4-monooxygenase multicomponent enzyme system which catalyzes the O2- and NADH-dependent hydroxylation of toluene to form p-cresol. Also able to convert benzene to phenol, catechol, and 1,2,3-trihydroxybenzene by successive hydroxylations. This Ectopseudomonas mendocina (Pseudomonas mendocina) protein is Toluene-4-monooxygenase system, hydroxylase component subunit alpha.